The primary structure comprises 397 residues: Succinyl-diaminopimelate desuccinylase (397 aa).

His73 provides a ligand contact to Zn(2+). Asp75 is an active-site residue. Residue Asp106 coordinates Zn(2+). Glu140 (proton acceptor) is an active-site residue. Residues Glu141, Glu169, and His366 each contribute to the Zn(2+) site.

It belongs to the peptidase M20A family. DapE subfamily. As to quaternary structure, homodimer. Zn(2+) is required as a cofactor. Co(2+) serves as cofactor.

It carries out the reaction N-succinyl-(2S,6S)-2,6-diaminopimelate + H2O = (2S,6S)-2,6-diaminopimelate + succinate. It participates in amino-acid biosynthesis; L-lysine biosynthesis via DAP pathway; LL-2,6-diaminopimelate from (S)-tetrahydrodipicolinate (succinylase route): step 3/3. Functionally, catalyzes the hydrolysis of N-succinyl-L,L-diaminopimelic acid (SDAP), forming succinate and LL-2,6-diaminopimelate (DAP), an intermediate involved in the bacterial biosynthesis of lysine and meso-diaminopimelic acid, an essential component of bacterial cell walls. The protein is Succinyl-diaminopimelate desuccinylase of Rhizobium leguminosarum bv. trifolii (strain WSM2304).